Reading from the N-terminus, the 693-residue chain is C6 finger domain transcription factor nscR (693 aa).

Residues Cys17–Cys43 constitute a DNA-binding region (zn(2)-C6 fungal-type). Residues Ala589–Ser608 form a disordered region.

The protein resides in the nucleus. Transcription factor that specifically regulates the neosartoricin B biosynthesis gene cluster. The sequence is that of C6 finger domain transcription factor nscR from Trichophyton rubrum (strain ATCC MYA-4607 / CBS 118892) (Athlete's foot fungus).